The primary structure comprises 202 residues: Urease accessory protein UreF (202 aa).

This sequence belongs to the UreF family. UreD, UreF and UreG form a complex that acts as a GTP-hydrolysis-dependent molecular chaperone, activating the urease apoprotein by helping to assemble the nickel containing metallocenter of UreC. The UreE protein probably delivers the nickel.

Its subcellular location is the cytoplasm. Required for maturation of urease via the functional incorporation of the urease nickel metallocenter. In Sporosarcina pasteurii (Bacillus pasteurii), this protein is Urease accessory protein UreF.